The chain runs to 340 residues: MKALVKRETNKGIWLEQVPVPTPGPNEVLIKLEKTAICGTDLHIYLWDEWSQRTIKPGLTIGHEFVGRVAELGSAVTGYQVGQRVSAEGHIVCGHCRNCRGGRPHLCPNTMGIGVNVNGAFAEYMVMPASNLWPIPDQIPSELAAFFDPYGNAAHCALEFDVIGEDVLITGAGPIGIIAAGICKHIGARNVVVTDVNDFRLKLAADMGATRVVNVSKTSLKDVMADLHMEGFDVGLEMSGNPRAFNDMLDCMYHGGKIAMLGIMPRGAGCDWDKIIFKGLTVQGIYGRKMYETWYKMTQLVLSGFPLHKVLTHQLPIDDFQKGFDLMEAGKAGKVVLSWN.

Position 38 (C38) interacts with Zn(2+). Residues T40 and H43 each act as charge relay system in the active site. Zn(2+) is bound by residues H63, E64, C93, C96, C99, and C107. NAD(+) is bound by residues I175, D195, R200, 261-263, and 285-286; these read LGI and IY.

This sequence belongs to the zinc-containing alcohol dehydrogenase family. As to quaternary structure, homotetramer. The cofactor is Zn(2+).

The protein localises to the cytoplasm. It catalyses the reaction L-threonine + NAD(+) = (2S)-2-amino-3-oxobutanoate + NADH + H(+). It functions in the pathway amino-acid degradation; L-threonine degradation via oxydo-reductase pathway; glycine from L-threonine: step 1/2. Catalyzes the NAD(+)-dependent oxidation of L-threonine to 2-amino-3-ketobutyrate. The polypeptide is L-threonine 3-dehydrogenase (Xanthomonas oryzae pv. oryzae (strain MAFF 311018)).